Consider the following 399-residue polypeptide: Argininosuccinate synthase (399 aa).

12 to 20 (AFSGGLDTS) is a binding site for ATP. Y90 is an L-citrulline binding site. G120 provides a ligand contact to ATP. T122, N126, and D127 together coordinate L-aspartate. Position 126 (N126) interacts with L-citrulline. R130, S175, E260, and Y272 together coordinate L-citrulline.

This sequence belongs to the argininosuccinate synthase family. Type 1 subfamily. Homotetramer.

Its subcellular location is the cytoplasm. The enzyme catalyses L-citrulline + L-aspartate + ATP = 2-(N(omega)-L-arginino)succinate + AMP + diphosphate + H(+). The protein operates within amino-acid biosynthesis; L-arginine biosynthesis; L-arginine from L-ornithine and carbamoyl phosphate: step 2/3. This chain is Argininosuccinate synthase, found in Methanothermobacter thermautotrophicus (strain ATCC 29096 / DSM 1053 / JCM 10044 / NBRC 100330 / Delta H) (Methanobacterium thermoautotrophicum).